The chain runs to 153 residues: UPF0756 membrane protein lmo1568 (153 aa).

Helical transmembrane passes span 6–26 (MLFL…SLII), 54–74 (WGVT…QIGF), 80–100 (SFKS…SILA), and 117–137 (LVFG…GPVI).

It belongs to the UPF0756 family.

The protein resides in the cell membrane. The sequence is that of UPF0756 membrane protein lmo1568 from Listeria monocytogenes serovar 1/2a (strain ATCC BAA-679 / EGD-e).